The primary structure comprises 362 residues: Nuclear hormone receptor family member nhr-77 (362 aa).

Residues 8–82 (DPICPVCEFP…AGMKRNLVKQ (75 aa)) constitute a DNA-binding region (nuclear receptor). NR C4-type zinc fingers lie at residues 11–32 (CPVC…CGAC) and 48–69 (CEKN…FDYC). The 218-residue stretch at 145–362 (EAEKDVSKIL…KLYIQLGLPF (218 aa)) folds into the NR LBD domain.

The protein belongs to the nuclear hormone receptor family.

It is found in the nucleus. In terms of biological role, orphan nuclear receptor. This is Nuclear hormone receptor family member nhr-77 (nhr-77) from Caenorhabditis elegans.